A 318-amino-acid polypeptide reads, in one-letter code: UDP-3-O-acylglucosamine N-acyltransferase (318 aa).

The Proton acceptor role is filled by histidine 230.

Belongs to the transferase hexapeptide repeat family. LpxD subfamily. As to quaternary structure, homotrimer.

It carries out the reaction a UDP-3-O-[(3R)-3-hydroxyacyl]-alpha-D-glucosamine + a (3R)-hydroxyacyl-[ACP] = a UDP-2-N,3-O-bis[(3R)-3-hydroxyacyl]-alpha-D-glucosamine + holo-[ACP] + H(+). Its pathway is bacterial outer membrane biogenesis; LPS lipid A biosynthesis. Catalyzes the N-acylation of UDP-3-O-acylglucosamine using 3-hydroxyacyl-ACP as the acyl donor. Is involved in the biosynthesis of lipid A, a phosphorylated glycolipid that anchors the lipopolysaccharide to the outer membrane of the cell. In Wolinella succinogenes (strain ATCC 29543 / DSM 1740 / CCUG 13145 / JCM 31913 / LMG 7466 / NCTC 11488 / FDC 602W) (Vibrio succinogenes), this protein is UDP-3-O-acylglucosamine N-acyltransferase.